The sequence spans 743 residues: Tudor domain-containing protein 3 (743 aa).

The interval 241 to 262 (KTFGGGGGGARSNLNIGAAGHR) is disordered. In terms of domain architecture, UBA spans 286 to 326 (LVDEKALKHITEMGFSKEASRQALMDNANNLEAALNVLLNS). Disordered regions lie at residues 327–365 (SKQK…APST) and 380–549 (EEPK…CYER). The residue at position 349 (serine 349) is a Phosphoserine. Residues 414 to 431 (PRNDTRQPRNERPPRFQK) are compositionally biased toward basic and acidic residues. Positions 432-445 (DTPTSKSTVENSVL) are enriched in polar residues. Serine 438 is subject to Phosphoserine. 2 stretches are compositionally biased toward basic and acidic residues: residues 464–484 (AEER…KDAS) and 536–549 (RENQ…CYER). Lysine 563 participates in a covalent cross-link: Glycyl lysine isopeptide (Lys-Gly) (interchain with G-Cter in SUMO2). A disordered region spans residues 572–603 (TDYPRPVQSNSLGVPNGETAPPLKGRRVGPIK). Residues 647-707 (VWKPGDECFA…KPVQTEAWEE (61 aa)) enclose the Tudor domain. Positions 711–725 (YDHTIEFRRGGDGQP) are enriched in basic and acidic residues. The interval 711–743 (YDHTIEFRRGGDGQPRRSTRPTQQFYQPPRARN) is disordered. Residues 723 to 743 (GQPRRSTRPTQQFYQPPRARN) are EBM motif; may mediate interaction with the EJC.

As to quaternary structure, component of mRNA stress granules. Interacts with FMR1, FXR1, FXR2, EWSR1, FUS, SERBP1, EEF1A1 and DDX3X or DDX3Y, and with the small nuclear ribonucleoprotein-associated proteins SNRPB and SNRPN. Interacts with 'Lys-48'-linked tetra-ubiquitin, but not with monoubiquitin or 'Lys-63'-linked ubiquitin chains. May interact with the exon junction complex (EJC) composed at least of CASC3, EIF4A3, MAGOH and RBM8A. Interacts with POLR2A (via the C-terminal domain (CTD)).

The protein localises to the cytoplasm. The protein resides in the nucleus. Its function is as follows. Scaffolding protein that specifically recognizes and binds dimethylarginine-containing proteins. Plays a role in the regulation of translation of target mRNAs by binding Arg/Gly-rich motifs (GAR) in dimethylarginine-containing proteins. In nucleus, acts as a coactivator: recognizes and binds asymmetric dimethylation on the core histone tails associated with transcriptional activation (H3R17me2a and H4R3me2a) and recruits proteins at these arginine-methylated loci. In cytoplasm, acts as an antiviral factor that participates in the assembly of stress granules together with G3BP1. The polypeptide is Tudor domain-containing protein 3 (Tdrd3) (Mus musculus (Mouse)).